Reading from the N-terminus, the 458-residue chain is ATP synthase subunit beta (458 aa).

Gly-148–Thr-155 lines the ATP pocket.

This sequence belongs to the ATPase alpha/beta chains family. In terms of assembly, F-type ATPases have 2 components, CF(1) - the catalytic core - and CF(0) - the membrane proton channel. CF(1) has five subunits: alpha(3), beta(3), gamma(1), delta(1), epsilon(1). CF(0) has three main subunits: a(1), b(2) and c(9-12). The alpha and beta chains form an alternating ring which encloses part of the gamma chain. CF(1) is attached to CF(0) by a central stalk formed by the gamma and epsilon chains, while a peripheral stalk is formed by the delta and b chains.

It localises to the cell inner membrane. The catalysed reaction is ATP + H2O + 4 H(+)(in) = ADP + phosphate + 5 H(+)(out). In terms of biological role, produces ATP from ADP in the presence of a proton gradient across the membrane. The catalytic sites are hosted primarily by the beta subunits. In Shewanella piezotolerans (strain WP3 / JCM 13877), this protein is ATP synthase subunit beta.